Reading from the N-terminus, the 582-residue chain is Proline--tRNA ligase (582 aa).

Belongs to the class-II aminoacyl-tRNA synthetase family. ProS type 1 subfamily. In terms of assembly, homodimer.

The protein localises to the cytoplasm. It catalyses the reaction tRNA(Pro) + L-proline + ATP = L-prolyl-tRNA(Pro) + AMP + diphosphate. Functionally, catalyzes the attachment of proline to tRNA(Pro) in a two-step reaction: proline is first activated by ATP to form Pro-AMP and then transferred to the acceptor end of tRNA(Pro). As ProRS can inadvertently accommodate and process non-cognate amino acids such as alanine and cysteine, to avoid such errors it has two additional distinct editing activities against alanine. One activity is designated as 'pretransfer' editing and involves the tRNA(Pro)-independent hydrolysis of activated Ala-AMP. The other activity is designated 'posttransfer' editing and involves deacylation of mischarged Ala-tRNA(Pro). The misacylated Cys-tRNA(Pro) is not edited by ProRS. The chain is Proline--tRNA ligase from Mycobacterium tuberculosis (strain CDC 1551 / Oshkosh).